The chain runs to 195 residues: MVRHASISRTTKETDIQLQFVIDGEGKAELDTGVPFLTHMLDLFTKHGQFNLTVTAKGDTEVDDHHTTEDIGICLGQALREALGDKKGIKRYGNAFVPMDEALAQVIVDLSNRPHFEFRGEFPSEKVGTFDVELVHEFLWKLALEARMNLHVIVHYGRNTHHMIEAVFKALGRALDEATMIDPRVKGVPSTKGML.

It belongs to the imidazoleglycerol-phosphate dehydratase family.

Its subcellular location is the cytoplasm. It carries out the reaction D-erythro-1-(imidazol-4-yl)glycerol 3-phosphate = 3-(imidazol-4-yl)-2-oxopropyl phosphate + H2O. It participates in amino-acid biosynthesis; L-histidine biosynthesis; L-histidine from 5-phospho-alpha-D-ribose 1-diphosphate: step 6/9. This Geobacillus sp. (strain WCH70) protein is Imidazoleglycerol-phosphate dehydratase.